The primary structure comprises 71 residues: ATP synthase F(0) complex subunit e, mitochondrial (71 aa).

Residue K34 is modified to N6-acetyllysine. Phosphoserine is present on S68.

This sequence belongs to the ATPase e subunit family. As to quaternary structure, component of the ATP synthase complex composed at least of ATP5F1A/subunit alpha, ATP5F1B/subunit beta, ATP5MC1/subunit c (homooctomer), MT-ATP6/subunit a, MT-ATP8/subunit 8, ATP5ME/subunit e, ATP5MF/subunit f, ATP5MG/subunit g, ATP5MK/subunit k, ATP5MJ/subunit j, ATP5F1C/subunit gamma, ATP5F1D/subunit delta, ATP5F1E/subunit epsilon, ATP5PF/subunit F6, ATP5PB/subunit b, ATP5PD/subunit d, ATP5PO/subunit OSCP. ATP synthase complex consists of a soluble F(1) head domain (subunits alpha(3) and beta(3)) - the catalytic core - and a membrane F(0) domain - the membrane proton channel (subunits c, a, 8, e, f, g, k and j). These two domains are linked by a central stalk (subunits gamma, delta, and epsilon) rotating inside the F1 region and a stationary peripheral stalk (subunits F6, b, d, and OSCP).

The protein localises to the mitochondrion. It is found in the mitochondrion inner membrane. Its function is as follows. Subunit e, of the mitochondrial membrane ATP synthase complex (F(1)F(0) ATP synthase or Complex V) that produces ATP from ADP in the presence of a proton gradient across the membrane which is generated by electron transport complexes of the respiratory chain. ATP synthase complex consist of a soluble F(1) head domain - the catalytic core - and a membrane F(1) domain - the membrane proton channel. These two domains are linked by a central stalk rotating inside the F(1) region and a stationary peripheral stalk. During catalysis, ATP synthesis in the catalytic domain of F(1) is coupled via a rotary mechanism of the central stalk subunits to proton translocation. In vivo, can only synthesize ATP although its ATP hydrolase activity can be activated artificially in vitro. Part of the complex F(0) domain. The polypeptide is ATP synthase F(0) complex subunit e, mitochondrial (Rattus norvegicus (Rat)).